Here is a 255-residue protein sequence, read N- to C-terminus: Triosephosphate isomerase (255 aa).

9-11 (NWK) lines the substrate pocket. His-95 functions as the Electrophile in the catalytic mechanism. Residue Glu-167 is the Proton acceptor of the active site. Substrate-binding positions include Gly-173, Ser-212, and 233–234 (GG).

The protein belongs to the triosephosphate isomerase family. In terms of assembly, homodimer.

It localises to the cytoplasm. It carries out the reaction D-glyceraldehyde 3-phosphate = dihydroxyacetone phosphate. It participates in carbohydrate biosynthesis; gluconeogenesis. The protein operates within carbohydrate degradation; glycolysis; D-glyceraldehyde 3-phosphate from glycerone phosphate: step 1/1. Involved in the gluconeogenesis. Catalyzes stereospecifically the conversion of dihydroxyacetone phosphate (DHAP) to D-glyceraldehyde-3-phosphate (G3P). This Enterobacter cloacae protein is Triosephosphate isomerase.